Consider the following 163-residue polypeptide: Inner membrane protein YcdZ (163 aa).

The Cytoplasmic segment spans residues 1–2 (MN). A helical membrane pass occupies residues 3 to 23 (ILLSIAITTGILSGIWGWVAV). Position 24 (Ser24) is a topological domain, periplasmic. Residues 25–45 (LGLLSWAGFLGCTAYFACPQG) traverse the membrane as a helical segment. Topologically, residues 46–48 (GLK) are cytoplasmic. A helical membrane pass occupies residues 49-69 (GLAISAATLLSGVVWAMVIIY). The Periplasmic segment spans residues 70–71 (GS). Residues 72–92 (ALAPHLEILGYVITGIVAFLM) form a helical membrane-spanning segment. The Cytoplasmic segment spans residues 93–98 (CIQAKQ). Residues 99–119 (LLLSFVPGTFIGACATFAGQG) traverse the membrane as a helical segment. The Periplasmic segment spans residues 120-122 (DWK). A helical membrane pass occupies residues 123-143 (LVLPSLALGLIFGYAMKNSGL). Residues 144 to 163 (WLAARSAKTAHREQEIKNKA) are Cytoplasmic-facing.

This sequence to E.coli YahC.

The protein resides in the cell inner membrane. The protein is Inner membrane protein YcdZ (ycdZ) of Escherichia coli (strain K12).